A 283-amino-acid polypeptide reads, in one-letter code: Elongation factor Ts (283 aa).

An involved in Mg(2+) ion dislocation from EF-Tu region spans residues 80–83 (TDFV).

It belongs to the EF-Ts family.

The protein localises to the cytoplasm. In terms of biological role, associates with the EF-Tu.GDP complex and induces the exchange of GDP to GTP. It remains bound to the aminoacyl-tRNA.EF-Tu.GTP complex up to the GTP hydrolysis stage on the ribosome. This chain is Elongation factor Ts, found in Histophilus somni (strain 129Pt) (Haemophilus somnus).